We begin with the raw amino-acid sequence, 133 residues long: Hemoglobin subunit alpha-2 (133 aa).

The Globin domain occupies 1 to 133; sequence NVKAVWEHVK…VKNVLTSRYR (133 aa). Position 50 (H50) interacts with O2. H79 lines the heme b pocket.

This sequence belongs to the globin family. In terms of assembly, minor hemoglobin is a heterotetramer of two alpha-2 chains and two beta-2 chains. In terms of tissue distribution, red blood cells.

Its function is as follows. Involved in oxygen transport from the lung to the various peripheral tissues. The polypeptide is Hemoglobin subunit alpha-2 (Pleurodeles waltl (Iberian ribbed newt)).